Reading from the N-terminus, the 739-residue chain is POU domain, class 2, transcription factor 1 (739 aa).

Residues 1–11 are compositionally biased toward polar residues; that stretch reads MNNPSETSKPS. Disordered stretches follow at residues 1 to 39, 67 to 95, 253 to 277, 353 to 378, and 489 to 553; these read MNNP…GGPI, SLNV…SVQA, TPIQ…EEPS, DSTL…RRKK, and SVTG…SSPL. Over residues 81–95 the composition is skewed to low complexity; the sequence is SQQPSQPSQQPSVQA. Residues 274–348 enclose the POU-specific domain; the sequence is EEPSDLEELE…LLEKWLNDAE (75 aa). The segment covering 353 to 364 has biased composition (low complexity); the sequence is DSTLSSPSALNS. Residues 375–434 constitute a DNA-binding region (homeobox); that stretch reads RRKKRTSIETNIRVALEKSFLENQKPTSEEITMIADQLNMEKEVIRVWFCNRRQKEKRIN. The segment covering 489-552 has biased composition (low complexity); that stretch reads SVTGTTETTS…QTTSTPLSSP (64 aa).

This sequence belongs to the POU transcription factor family. Class-2 subfamily. In terms of assembly, interacts with NR3C1, AR and PGR.

The protein localises to the nucleus. Functionally, transcription factor that binds to the octamer motif (5'-ATTTGCAT-3') and activates the promoters of the genes for some small nuclear RNAs (snRNA) and of genes such as those for histone H2B and immunoglobulins. Modulates transcription transactivation by NR3C1, AR and PGR. This is POU domain, class 2, transcription factor 1 (POU2F1) from Gallus gallus (Chicken).